A 712-amino-acid polypeptide reads, in one-letter code: Elongation factor G (712 aa).

The 283-residue stretch at Thr-8 to Thr-290 folds into the tr-type G domain. Residues Ala-17–Thr-24, Asp-88–His-92, and Asn-142–Asp-145 each bind GTP.

This sequence belongs to the TRAFAC class translation factor GTPase superfamily. Classic translation factor GTPase family. EF-G/EF-2 subfamily.

Its subcellular location is the cytoplasm. Its function is as follows. Catalyzes the GTP-dependent ribosomal translocation step during translation elongation. During this step, the ribosome changes from the pre-translocational (PRE) to the post-translocational (POST) state as the newly formed A-site-bound peptidyl-tRNA and P-site-bound deacylated tRNA move to the P and E sites, respectively. Catalyzes the coordinated movement of the two tRNA molecules, the mRNA and conformational changes in the ribosome. This Acinetobacter baumannii (strain AB0057) protein is Elongation factor G.